The sequence spans 369 residues: DNA replication and repair protein RecF (369 aa).

30-37 (GDNGSGKT) is a binding site for ATP.

This sequence belongs to the RecF family.

The protein resides in the cytoplasm. The RecF protein is involved in DNA metabolism; it is required for DNA replication and normal SOS inducibility. RecF binds preferentially to single-stranded, linear DNA. It also seems to bind ATP. The polypeptide is DNA replication and repair protein RecF (Pseudomonas paraeruginosa (strain DSM 24068 / PA7) (Pseudomonas aeruginosa (strain PA7))).